Reading from the N-terminus, the 934-residue chain is Isoleucine--tRNA ligase (934 aa).

A 'HIGH' region motif is present at residues 58–68 (PYANGEIHIGH). Position 559 (Glu559) interacts with L-isoleucyl-5'-AMP. A 'KMSKS' region motif is present at residues 600-604 (KMSKS). Lys603 is an ATP binding site. Residues Cys897, Cys900, Cys917, and Cys920 each coordinate Zn(2+).

Belongs to the class-I aminoacyl-tRNA synthetase family. IleS type 1 subfamily. As to quaternary structure, monomer. It depends on Zn(2+) as a cofactor.

It is found in the cytoplasm. The enzyme catalyses tRNA(Ile) + L-isoleucine + ATP = L-isoleucyl-tRNA(Ile) + AMP + diphosphate. Functionally, catalyzes the attachment of isoleucine to tRNA(Ile). As IleRS can inadvertently accommodate and process structurally similar amino acids such as valine, to avoid such errors it has two additional distinct tRNA(Ile)-dependent editing activities. One activity is designated as 'pretransfer' editing and involves the hydrolysis of activated Val-AMP. The other activity is designated 'posttransfer' editing and involves deacylation of mischarged Val-tRNA(Ile). This is Isoleucine--tRNA ligase from Teredinibacter turnerae (strain ATCC 39867 / T7901).